The sequence spans 137 residues: Fructose-bisphosphate aldolase C (137 aa).

The active-site Schiff-base intermediate with dihydroxyacetone-P is the Lys-3.

It belongs to the class I fructose-bisphosphate aldolase family. As to quaternary structure, homotetramer.

The catalysed reaction is beta-D-fructose 1,6-bisphosphate = D-glyceraldehyde 3-phosphate + dihydroxyacetone phosphate. It functions in the pathway carbohydrate degradation; glycolysis; D-glyceraldehyde 3-phosphate and glycerone phosphate from D-glucose: step 4/4. The sequence is that of Fructose-bisphosphate aldolase C (ALDOC) from Gallus gallus (Chicken).